Consider the following 651-residue polypeptide: Carboxypeptidase S1 homolog A (651 aa).

An N-terminal signal peptide occupies residues 1 to 19; that stretch reads MHLATGLAVALPFIGAASA. Cys50 and Cys121 are disulfide-bonded. Residues Asn77, Asn125, Asn128, Asn161, Asn184, and Asn202 are each glycosylated (N-linked (GlcNAc...) asparagine). Ser238 is an active-site residue. Asn260, Asn299, Asn308, Asn347, and Asn410 each carry an N-linked (GlcNAc...) asparagine glycan. Cystine bridges form between Cys325–Cys361 and Cys332–Cys354. Residue Asp458 is part of the active site. Cys461 is a binding site for substrate. Residues Asn474 and Asn504 are each glycosylated (N-linked (GlcNAc...) asparagine). His515 is an active-site residue. Glu516 contacts substrate. The tract at residues 604-630 is disordered; that stretch reads KSPAGKKQGPPPTSTSPPSPTSSSEGS. Pro residues predominate over residues 612–623; sequence GPPPTSTSPPSP. The GPI-anchor amidated serine moiety is linked to residue Ser625. The propeptide at 626 to 651 is removed in mature form; sequence SSEGSVKEFSVSVLGVSVLAAITFFL.

The protein belongs to the peptidase S10 family.

The protein localises to the cell membrane. The enzyme catalyses Preferential release of a C-terminal arginine or lysine residue.. Functionally, extracellular serine carboxypeptidase that contributes to pathogenicity. This Arthroderma otae (strain ATCC MYA-4605 / CBS 113480) (Microsporum canis) protein is Carboxypeptidase S1 homolog A (SCPA).